The following is a 990-amino-acid chain: Translation initiation factor IF-2 (990 aa).

The tract at residues 92–402 is disordered; it reads KKRTFVKRDD…QRDEHLQAAP (311 aa). 2 stretches are compositionally biased toward low complexity: residues 104–116 and 131–151; these read EGAADGAGSAAFA and EAPAEQAQADAAPAADGAAPA. Residues 158–201 show a composition bias toward basic and acidic residues; the sequence is ELARREEQARHQAELIRRQEAELAAKRAAREAREKREREAEERA. The segment covering 223-243 has biased composition (low complexity); it reads TREQAAEATARNAAQLQARAK. A compositionally biased stretch (basic and acidic residues) spans 244–264; sequence AAAESKARSDEEAARAADLDA. 2 stretches are compositionally biased toward low complexity: residues 281 to 290 and 318 to 342; these read ATPKKAVMVA and PAVGATRTAAGAARAGAAAGAPGAG. 2 stretches are compositionally biased toward basic and acidic residues: residues 358 to 368 and 386 to 398; these read PAKKKEIKTRG and RRGDSRDQRDEHL. A tr-type G domain is found at 490 to 659; it reads PRAPVVTVMG…LLQADVMELK (170 aa). Positions 499-506 are G1; that stretch reads GHVDHGKT. A GTP-binding site is contributed by 499–506; it reads GHVDHGKT. Positions 524 to 528 are G2; it reads GITQH. Positions 545-548 are G3; that stretch reads DTPG. Residues 545-549 and 599-602 contribute to the GTP site; these read DTPGH and TKAD. The segment at 599–602 is G4; the sequence is TKAD. The interval 635-637 is G5; the sequence is SSK.

The protein belongs to the TRAFAC class translation factor GTPase superfamily. Classic translation factor GTPase family. IF-2 subfamily.

It localises to the cytoplasm. Functionally, one of the essential components for the initiation of protein synthesis. Protects formylmethionyl-tRNA from spontaneous hydrolysis and promotes its binding to the 30S ribosomal subunits. Also involved in the hydrolysis of GTP during the formation of the 70S ribosomal complex. The sequence is that of Translation initiation factor IF-2 from Verminephrobacter eiseniae (strain EF01-2).